Here is a 686-residue protein sequence, read N- to C-terminus: Zinc finger protein 7 (686 aa).

The region spanning 4–76 (VTFGDVAVHF…DLQGAEGTEA (73 aa)) is the KRAB domain. Glycyl lysine isopeptide (Lys-Gly) (interchain with G-Cter in SUMO2) cross-links involve residues K81 and K101. Residues S126 and S138 each carry the phosphoserine modification. 6 consecutive C2H2-type zinc fingers follow at residues 223-245 (SRCQ…NNCH), 250-272 (YECA…QRIH), 278-300 (FKCT…QRIH), 306-328 (YRCE…QRIH), 334-356 (YGCR…QRTH), and 362-384 (YPCK…QRMH). Residues K279 and K292 each participate in a glycyl lysine isopeptide (Lys-Gly) (interchain with G-Cter in SUMO2) cross-link. K393 participates in a covalent cross-link: Glycyl lysine isopeptide (Lys-Gly) (interchain with G-Cter in SUMO2). 9 consecutive C2H2-type zinc fingers follow at residues 413–435 (FKCD…QLIH), 441–463 (YKCN…QRTH), 469–491 (FKCD…QRIH), 497–519 (YVCN…QRIH), 525–547 (YECL…QRVH), 553–575 (YKCN…QIIH), 581–603 (YECS…QRIH), 634–656 (HQCE…QRIH), and 662–684 (YKCN…QKIH).

It belongs to the krueppel C2H2-type zinc-finger protein family.

It is found in the nucleus. May be involved in transcriptional regulation. The polypeptide is Zinc finger protein 7 (ZNF7) (Pongo abelii (Sumatran orangutan)).